A 518-amino-acid chain; its full sequence is Cyclin-L2 (518 aa).

Cyclin-like stretches follow at residues 81 to 183 and 196 to 280; these read ELIQ…RVLK and KIIV…KILQ. Residues 310-518 are disordered; that stretch reads AKGLLPGTAP…DHPGHSRHRR (209 aa). Residues Ser-328, Ser-335, Ser-345, Ser-348, and Ser-366 each carry the phosphoserine modification. The segment at 382-420 is RS; it reads RSREQSYSRSPSRSASPKRRKSDSGSTSGGSKSQSRSRS. The segment covering 405–427 has biased composition (low complexity); the sequence is SGSTSGGSKSQSRSRSRSDSPPR. A compositionally biased stretch (basic and acidic residues) spans 438–450; it reads SEVRGSRKSKDCK. Residues 455–469 show a composition bias toward basic residues; that stretch reads KPHKSRSRSSSRSRS. Composition is skewed to basic and acidic residues over residues 470–479 and 487–512; these read RSRERTDNSG and YYRD…DHPG.

The protein belongs to the cyclin family. Cyclin L subfamily. Interacts with CDK11A, CDK11B, CDK12, CDK13 and POLR2A, the hyperphosphorylated C-terminal domain (CTD) of RNA polymerase II. May form a ternary complex with CDK11B and casein kinase II (CKII). Interacts with pre-mRNA-splicing factors, including at least SRSF1, SRSF2 and SRSF7/SLU7. As to expression, widely expressed (at protein level).

The protein resides in the nucleus speckle. The protein localises to the nucleus. It localises to the nucleoplasm. Involved in pre-mRNA splicing. May induce cell death, possibly by acting on the transcription and RNA processing of apoptosis-related factors. The protein is Cyclin-L2 (Ccnl2) of Mus musculus (Mouse).